A 174-amino-acid polypeptide reads, in one-letter code: uncharacterized protein (174 aa).

This is an uncharacterized protein from Bacillus subtilis (strain 168).